We begin with the raw amino-acid sequence, 562 residues long: Ribonuclease Y (562 aa).

The helical transmembrane segment at 1–21 (MNMLYFVLALLVGLAGGFFVG) threads the bilayer. Residues 108–129 (AAQDAARERETLSADRQETRRE) form a disordered region. A KH domain is found at 252-312 (SVSVVPIPND…VRREVARHVL (61 aa)). In terms of domain architecture, HD spans 378–471 (VLKHSVQVAH…VAAADAISAA (94 aa)).

The protein belongs to the RNase Y family.

The protein resides in the cell membrane. Its function is as follows. Endoribonuclease that initiates mRNA decay. This is Ribonuclease Y from Deinococcus geothermalis (strain DSM 11300 / CIP 105573 / AG-3a).